The primary structure comprises 1041 residues: Desmoglein-4 (1041 aa).

The N-terminal stretch at 1-23 (MDWLLFRNICLLILFMVVLGVNS) is a signal peptide. The propeptide occupies 24 to 49 (EFIVEVKELDIENGTTTWQTVRRQKR). 4 Cadherin domains span residues 50–157 (EWIK…PPVF), 158–269 (TQNV…FPIL), 270–385 (EKTS…GPTF), and 389–497 (SMTF…CPVI). Residues 50–634 (EWIKFAAACR…RQSNVGLGPA (585 aa)) are Extracellular-facing. Asn110 carries N-linked (GlcNAc...) asparagine glycosylation. Asn545 carries an N-linked (GlcNAc...) asparagine glycan. The chain crosses the membrane as a helical span at residues 635–655 (GIGMIILGLLLLLLSPLLLLM). Residues 656–1041 (CCCKRRQPEG…RYSNMHYSRQ (386 aa)) lie on the Cytoplasmic side of the membrane. Desmoglein repeat repeat units lie at residues 884–910 (TLSEAEFQAEMAAASEPMIHGDIIVTE) and 911–941 (TYTTSDPCVQPTTIVFDSQIPPNVVVTETVM). The interval 1014 to 1041 (ISQTTGSTSPMTSQHRVTRYSNMHYSRQ) is disordered.

As to quaternary structure, interacts with JUP. Strongly expressed in the skin; during the anagen stage of hair follicles in the matrix, precortex and inner rooth sheath.

It is found in the cell membrane. The protein resides in the cell junction. It localises to the desmosome. Functionally, a component of desmosome cell-cell junctions which are required for positive regulation of cellular adhesion. Coordinates the transition from proliferation to differentiation in hair follicle keratinocytes. Plays a role in moderating lymphocyte migration to inflamed skin and maintaining homeostasis of the epidermal inflammatory response. The chain is Desmoglein-4 (Dsg4) from Mus musculus (Mouse).